The sequence spans 518 residues: GMP synthase [glutamine-hydrolyzing] (518 aa).

A Glutamine amidotransferase type-1 domain is found at 6–200 (RLLIIDFGSQ…FVRLAGFKGD (195 aa)). The active-site Nucleophile is cysteine 84. Active-site residues include histidine 175 and glutamate 177. The 193-residue stretch at 201–393 (WTMGAYREEA…LGLPESFIGR (193 aa)) folds into the GMPS ATP-PPase domain. 228–234 (SGGVDSS) lines the ATP pocket.

In terms of assembly, homodimer.

The enzyme catalyses XMP + L-glutamine + ATP + H2O = GMP + L-glutamate + AMP + diphosphate + 2 H(+). The protein operates within purine metabolism; GMP biosynthesis; GMP from XMP (L-Gln route): step 1/1. Functionally, catalyzes the synthesis of GMP from XMP. The protein is GMP synthase [glutamine-hydrolyzing] of Cereibacter sphaeroides (strain ATCC 17023 / DSM 158 / JCM 6121 / CCUG 31486 / LMG 2827 / NBRC 12203 / NCIMB 8253 / ATH 2.4.1.) (Rhodobacter sphaeroides).